Reading from the N-terminus, the 491-residue chain is MISKQEYQAQAAQGYNRIPLVQELLADLDTPLSLYLKLANRPYTYLLESVVGGERFGRYSFIGLPCSHYLKASGKHVDVYQNGEIVEQHDGNPLPFIEAFHNRFKTPEIPSLPRFTGGLVGYFGYETIYNFEHFAHRLKNTTKADPLGTPDILLMLSQELAVIDNLSGKIHLVVYADPSQPDGYERARERLEDIRTQLRQSCAIPLSLGSKHTEAVSEFGEEPFKACVNKIKDYIFAGDCMQVVPSQRMSMEFTDSPLALYRALRTLNPSPYLFYYDFGDFHIVGSSPEILVRRERNDVIVRPIAGTRLRGKTPAEDLANEQDLLSDAKEIAEHVMLIDLGRNDVGRISKTGEVKVTDKMVIEKYSHVMHIVSNVEGRLKDGMTNMDILAATFPAGTLSGAPKVRAMEIIEEVEPSKRGIYGGAVGVWGFNNDMDLAIAIRTAVVKNNTLYVQSGAGVVADSDPASEWQETQNKARAVIHAAQMVQEGLDK.

L-tryptophan is bound by residues Ser49 and Pro271–Leu273. Gly306–Thr307 lines the chorismate pocket. Mg(2+) is bound at residue Glu333. Residues Tyr421, Arg441, Gly455–Gly457, and Gly457 contribute to the chorismate site. Glu470 serves as a coordination point for Mg(2+).

The protein belongs to the anthranilate synthase component I family. In terms of assembly, heterotetramer consisting of two non-identical subunits: a beta subunit (TrpG) and a large alpha subunit (TrpE). Mg(2+) is required as a cofactor.

It catalyses the reaction chorismate + L-glutamine = anthranilate + pyruvate + L-glutamate + H(+). It participates in amino-acid biosynthesis; L-tryptophan biosynthesis; L-tryptophan from chorismate: step 1/5. With respect to regulation, feedback inhibited by tryptophan. Functionally, part of a heterotetrameric complex that catalyzes the two-step biosynthesis of anthranilate, an intermediate in the biosynthesis of L-tryptophan. In the first step, the glutamine-binding beta subunit (TrpG) of anthranilate synthase (AS) provides the glutamine amidotransferase activity which generates ammonia as a substrate that, along with chorismate, is used in the second step, catalyzed by the large alpha subunit of AS (TrpE) to produce anthranilate. In the absence of TrpG, TrpE can synthesize anthranilate directly from chorismate and high concentrations of ammonia. The polypeptide is Anthranilate synthase component 1 (trpE) (Neisseria meningitidis serogroup B (strain ATCC BAA-335 / MC58)).